Reading from the N-terminus, the 211-residue chain is Bifunctional transcriptional activator/DNA repair enzyme AdaA (211 aa).

C54 acts as the Nucleophile; methyl group acceptor from methylphosphotriester in catalysis. 4 residues coordinate Zn(2+): C54, C58, C85, and C88. The 99-residue stretch at 102-200 (DLITEYIDKN…GQTPARFRQM (99 aa)) folds into the HTH araC/xylS-type domain. A DNA-binding region (H-T-H motif) is located at residues 119 to 140 (ESLADICHGSPYHMHRTFKKIK).

It depends on Zn(2+) as a cofactor.

The catalysed reaction is (2'-deoxyribonucleoside 5'-methylphosphotriester)-DNA + L-cysteinyl-[protein] = 2'-deoxyribonucleotide-DNA + S-methyl-L-cysteinyl-[protein] + H(+). Is involved in the adaptive response to alkylation damage in DNA caused by alkylating agents. Repairs the methylphosphotriester lesions in DNA by a direct and irreversible transfer of the methyl group to one of its own cysteine residues. Functionally, the methylation of AdaA by methylphosphotriesters in DNA leads to its activation as a transcriptional regulator that activates the transcription of the ada operon which consists of adaA and adaB, and of the adjacent gene alkA. The protein is Bifunctional transcriptional activator/DNA repair enzyme AdaA (adaA) of Bacillus subtilis (strain 168).